Consider the following 153-residue polypeptide: NAD(P)H-quinone oxidoreductase subunit N (153 aa).

Belongs to the complex I NdhN subunit family. As to quaternary structure, NDH-1 can be composed of about 15 different subunits; different subcomplexes with different compositions have been identified which probably have different functions.

The protein resides in the cellular thylakoid membrane. It catalyses the reaction a plastoquinone + NADH + (n+1) H(+)(in) = a plastoquinol + NAD(+) + n H(+)(out). It carries out the reaction a plastoquinone + NADPH + (n+1) H(+)(in) = a plastoquinol + NADP(+) + n H(+)(out). Functionally, NDH-1 shuttles electrons from an unknown electron donor, via FMN and iron-sulfur (Fe-S) centers, to quinones in the respiratory and/or the photosynthetic chain. The immediate electron acceptor for the enzyme in this species is believed to be plastoquinone. Couples the redox reaction to proton translocation, and thus conserves the redox energy in a proton gradient. Cyanobacterial NDH-1 also plays a role in inorganic carbon-concentration. This Synechococcus sp. (strain CC9605) protein is NAD(P)H-quinone oxidoreductase subunit N.